The chain runs to 155 residues: Large ribosomal subunit protein uL16 (155 aa).

Residues 1–22 (MLSPKRTKYRKQQRGRMKGKAT) are disordered.

Belongs to the universal ribosomal protein uL16 family. As to quaternary structure, part of the 50S ribosomal subunit.

Binds 23S rRNA and is also seen to make contacts with the A and possibly P site tRNAs. This Synechococcus sp. (strain JA-2-3B'a(2-13)) (Cyanobacteria bacterium Yellowstone B-Prime) protein is Large ribosomal subunit protein uL16.